Reading from the N-terminus, the 411-residue chain is Citrate synthase (411 aa).

Active-site residues include H304 and D363.

The protein belongs to the citrate synthase family.

The enzyme catalyses oxaloacetate + acetyl-CoA + H2O = citrate + CoA + H(+). It functions in the pathway carbohydrate metabolism; tricarboxylic acid cycle; isocitrate from oxaloacetate: step 1/2. In Rickettsia canadensis, this protein is Citrate synthase (gltA).